Here is a 270-residue protein sequence, read N- to C-terminus: Undecaprenyl-diphosphatase (270 aa).

A run of 8 helical transmembrane segments spans residues M1–I21, Q39–F59, S87–C107, V114–W134, A147–G167, F193–A213, F223–L243, and T250–G270.

It belongs to the UppP family.

Its subcellular location is the cell inner membrane. The enzyme catalyses di-trans,octa-cis-undecaprenyl diphosphate + H2O = di-trans,octa-cis-undecaprenyl phosphate + phosphate + H(+). Catalyzes the dephosphorylation of undecaprenyl diphosphate (UPP). Confers resistance to bacitracin. This is Undecaprenyl-diphosphatase from Magnetococcus marinus (strain ATCC BAA-1437 / JCM 17883 / MC-1).